Consider the following 279-residue polypeptide: UPF0276 protein SO_2008 (279 aa).

The protein belongs to the UPF0276 family.

This chain is UPF0276 protein SO_2008, found in Shewanella oneidensis (strain ATCC 700550 / JCM 31522 / CIP 106686 / LMG 19005 / NCIMB 14063 / MR-1).